Here is a 436-residue protein sequence, read N- to C-terminus: 3-ketoacyl-CoA thiolase (436 aa).

Catalysis depends on Cys99, which acts as the Acyl-thioester intermediate. Residues His392 and Cys422 each act as proton acceptor in the active site.

Belongs to the thiolase-like superfamily. Thiolase family. As to quaternary structure, heterotetramer of two alpha chains (FadJ) and two beta chains (FadI).

The protein localises to the cytoplasm. The catalysed reaction is an acyl-CoA + acetyl-CoA = a 3-oxoacyl-CoA + CoA. It participates in lipid metabolism; fatty acid beta-oxidation. Functionally, catalyzes the final step of fatty acid oxidation in which acetyl-CoA is released and the CoA ester of a fatty acid two carbons shorter is formed. This is 3-ketoacyl-CoA thiolase from Escherichia coli O9:H4 (strain HS).